Reading from the N-terminus, the 601-residue chain is Elongation factor 4 (601 aa).

The tr-type G domain maps to 7 to 189 (SHIRNFSIIA…SIVQLVPPPQ (183 aa)). GTP contacts are provided by residues 19-24 (DHGKST) and 136-139 (NKID).

It belongs to the TRAFAC class translation factor GTPase superfamily. Classic translation factor GTPase family. LepA subfamily.

The protein resides in the cell inner membrane. The catalysed reaction is GTP + H2O = GDP + phosphate + H(+). Its function is as follows. Required for accurate and efficient protein synthesis under certain stress conditions. May act as a fidelity factor of the translation reaction, by catalyzing a one-codon backward translocation of tRNAs on improperly translocated ribosomes. Back-translocation proceeds from a post-translocation (POST) complex to a pre-translocation (PRE) complex, thus giving elongation factor G a second chance to translocate the tRNAs correctly. Binds to ribosomes in a GTP-dependent manner. The protein is Elongation factor 4 of Trichodesmium erythraeum (strain IMS101).